Here is a 225-residue protein sequence, read N- to C-terminus: Insulin-induced gene 2 protein (225 aa).

At 1–28 (MAEGETKSPGPKKCGPYISSVTSQSVNL) the chain is on the cytoplasmic side. Residues 29 to 51 (MIRGVVLFFIGVFLALVLNLLQI) form a helical membrane-spanning segment. Topologically, residues 52 to 70 (QRNVTLFPPDVIASIFSSA) are lumenal. The chain crosses the membrane as a helical span at residues 71 to 88 (WWVPPCCGTASAVIGLLY). Over 89–103 (PCIDRHLGEPHKFKR) the chain is Cytoplasmic. A helical membrane pass occupies residues 104 to 126 (EWSSVMRCVAVFVGINHASAKVD). Residues 127–129 (FDN) are Lumenal-facing. A helical transmembrane segment spans residues 130 to 148 (NIQLSLTLAALSIGLWWTF). The Cytoplasmic segment spans residues 149–153 (DRSRS). At Ser151 the chain carries Phosphoserine. A helical membrane pass occupies residues 154–175 (GFGLGVGIAFLATLVTQLLVYN). The Lumenal portion of the chain corresponds to 176 to 189 (GVYQYTSPDFLYVR). A helical membrane pass occupies residues 190 to 207 (SWLPCIFFAGGITMGNIG). Over 208–225 (RQLAMYECKVIAEKSHQE) the chain is Cytoplasmic. Residue Cys215 is modified to Cysteine sulfenic acid (-SOH); alternate. A Glycyl cysteine thioester (Cys-Gly) (interchain with G-Cter in ubiquitin); alternate cross-link involves residue Cys215. Residues 219-225 (AEKSHQE) carry the KxHxx motif.

This sequence belongs to the INSIG family. In terms of assembly, interacts with SCAP; interaction is direct and only takes place in the presence of sterols; it prevents interaction between SCAP and the coat protein complex II (COPII). Associates with the SCAP-SREBP complex (composed of SCAP and SREBF1/SREBP1 or SREBF2/SREBP2); association is mediated via its interaction with SCAP and only takes place in the presence of sterols. Interacts with RNF139. Interacts with RNF145. Phosphorylation at Ser-151 by PCK1 reduces binding to oxysterol, disrupting the interaction between INSIG2 and SCAP, thereby promoting nuclear translocation of SREBP proteins (SREBF1/SREBP1 or SREBF2/SREBP2) and subsequent transcription of downstream lipogenesis-related genes. In terms of processing, polyubiquitinated by AMFR/gp78 at Cys-215 in some tissues such as adipose tissues, undifferentiated myoblasts and liver, leading to its degradation. In differentiated myotubes, Cys-215 oxidation prevents ubiquitination at the same site, resulting in protein stabilization. Post-translationally, oxidized at Cys-215 in differentiated myotubes, preventing ubiquitination at the same site, and resulting in protein stabilization.

The protein resides in the endoplasmic reticulum membrane. Functionally, oxysterol-binding protein that mediates feedback control of cholesterol synthesis by controlling both endoplasmic reticulum to Golgi transport of SCAP and degradation of HMGCR. Acts as a negative regulator of cholesterol biosynthesis by mediating the retention of the SCAP-SREBP complex in the endoplasmic reticulum, thereby blocking the processing of sterol regulatory element-binding proteins (SREBPs) SREBF1/SREBP1 and SREBF2/SREBP2. Binds oxysterol, including 22-hydroxycholesterol, 24-hydroxycholesterol, 25-hydroxycholesterol and 27-hydroxycholesterol, regulating interaction with SCAP and retention of the SCAP-SREBP complex in the endoplasmic reticulum. In presence of oxysterol, interacts with SCAP, retaining the SCAP-SREBP complex in the endoplasmic reticulum, thereby preventing SCAP from escorting SREBF1/SREBP1 and SREBF2/SREBP2 to the Golgi. Sterol deprivation or phosphorylation by PCK1 reduce oxysterol-binding, disrupting the interaction between INSIG2 and SCAP, thereby promoting Golgi transport of the SCAP-SREBP complex, followed by processing and nuclear translocation of SREBF1/SREBP1 and SREBF2/SREBP2. Also regulates cholesterol synthesis by regulating degradation of HMGCR: initiates the sterol-mediated ubiquitin-mediated endoplasmic reticulum-associated degradation (ERAD) of HMGCR via recruitment of the reductase to the ubiquitin ligase RNF139. This Sus scrofa (Pig) protein is Insulin-induced gene 2 protein.